We begin with the raw amino-acid sequence, 197 residues long: Nucleoside triphosphate pyrophosphatase (197 aa).

D74 serves as the catalytic Proton acceptor.

It belongs to the Maf family. A divalent metal cation serves as cofactor.

The protein resides in the cytoplasm. It carries out the reaction a ribonucleoside 5'-triphosphate + H2O = a ribonucleoside 5'-phosphate + diphosphate + H(+). It catalyses the reaction a 2'-deoxyribonucleoside 5'-triphosphate + H2O = a 2'-deoxyribonucleoside 5'-phosphate + diphosphate + H(+). In terms of biological role, nucleoside triphosphate pyrophosphatase. May have a dual role in cell division arrest and in preventing the incorporation of modified nucleotides into cellular nucleic acids. In Granulibacter bethesdensis (strain ATCC BAA-1260 / CGDNIH1), this protein is Nucleoside triphosphate pyrophosphatase.